Reading from the N-terminus, the 277-residue chain is Cell division protein ZipA (277 aa).

At 1-5 (MQDLR) the chain is on the periplasmic side. Residues 6-26 (LMLLLFGVITIIVLFLHGVWA) form a helical membrane-spanning segment. Topologically, residues 27–277 (RRKERSALFY…NALIRSTPHL (251 aa)) are cytoplasmic. The segment at 120–139 (QKKSDDLSHQSKETHHPSIQ) is disordered.

This sequence belongs to the ZipA family. In terms of assembly, interacts with FtsZ via their C-terminal domains.

The protein localises to the cell inner membrane. Essential cell division protein that stabilizes the FtsZ protofilaments by cross-linking them and that serves as a cytoplasmic membrane anchor for the Z ring. Also required for the recruitment to the septal ring of downstream cell division proteins. This is Cell division protein ZipA from Hamiltonella defensa subsp. Acyrthosiphon pisum (strain 5AT).